Here is a 354-residue protein sequence, read N- to C-terminus: MAQASNSRIKVGIVGGTGYTGVELLRLLSQHPHVELTAITSRKEDGLPVADMYPNLRGRVKLAFSAPEKASLTDCDVVFFATPHGVAMAQAAELLAAGTRVIDLAADFRLQDTAVFERWYKIPHTCPDILADSVYGLVELNREAISKARVIGNPGCYPTTVLLGLAPLIEGGKQLVDVQTLIADCKSGVSGAGRKAEVGSLFSEASDNFKAYGVAGHRHQPEIVAQLEKLAGGKVGLTFVPHLVPMIRGMFSTLYARILPQARDTDFQALFEARYADEPFVDVMPAGSLPETRSVRASNNLRISVQRPGGGDQLVILVVQDNLVKGASGQAVQNMNLMFGLPESAGLDQVAILP.

Cys156 is an active-site residue.

It belongs to the NAGSA dehydrogenase family. Type 1 subfamily.

The protein localises to the cytoplasm. It carries out the reaction N-acetyl-L-glutamate 5-semialdehyde + phosphate + NADP(+) = N-acetyl-L-glutamyl 5-phosphate + NADPH + H(+). Its pathway is amino-acid biosynthesis; L-arginine biosynthesis; N(2)-acetyl-L-ornithine from L-glutamate: step 3/4. Its function is as follows. Catalyzes the NADPH-dependent reduction of N-acetyl-5-glutamyl phosphate to yield N-acetyl-L-glutamate 5-semialdehyde. In Bordetella pertussis (strain Tohama I / ATCC BAA-589 / NCTC 13251), this protein is N-acetyl-gamma-glutamyl-phosphate reductase.